Reading from the N-terminus, the 355-residue chain is Protein RecA (355 aa).

65-72 (GPESSGKT) is a binding site for ATP.

Belongs to the RecA family.

The protein resides in the cytoplasm. Can catalyze the hydrolysis of ATP in the presence of single-stranded DNA, the ATP-dependent uptake of single-stranded DNA by duplex DNA, and the ATP-dependent hybridization of homologous single-stranded DNAs. It interacts with LexA causing its activation and leading to its autocatalytic cleavage. The chain is Protein RecA from Pseudomonas putida (strain GB-1).